The sequence spans 236 residues: Three prime repair exonuclease 2 (236 aa).

Residues Asp14 and Glu16 each coordinate Mg(2+). Substrate contacts are provided by residues 16 to 17 (EA) and Tyr122. Catalysis depends on His188, which acts as the Proton donor/acceptor. Asp193 serves as a coordination point for Mg(2+). A substrate-binding site is contributed by Asp193.

It belongs to the exonuclease superfamily. TREX family. Homodimer. Mg(2+) serves as cofactor.

The protein localises to the nucleus. The enzyme catalyses Exonucleolytic cleavage in the 3'- to 5'-direction to yield nucleoside 5'-phosphates.. Exonuclease with a preference for double-stranded DNA with mismatched 3' termini. May play a role in DNA repair. This is Three prime repair exonuclease 2 (Trex2) from Mus musculus (Mouse).